We begin with the raw amino-acid sequence, 104 residues long: Large ribosomal subunit protein uL24 (104 aa).

This sequence belongs to the universal ribosomal protein uL24 family. As to quaternary structure, part of the 50S ribosomal subunit.

One of two assembly initiator proteins, it binds directly to the 5'-end of the 23S rRNA, where it nucleates assembly of the 50S subunit. Functionally, one of the proteins that surrounds the polypeptide exit tunnel on the outside of the subunit. The sequence is that of Large ribosomal subunit protein uL24 from Klebsiella pneumoniae (strain 342).